A 211-amino-acid chain; its full sequence is LexA repressor (211 aa).

A DNA-binding region (H-T-H motif) is located at residues 27 to 47; the sequence is QTEIARAFGFKGVRAAQYHLE. Catalysis depends on for autocatalytic cleavage activity residues Ser131 and Lys168.

The protein belongs to the peptidase S24 family. Homodimer.

The enzyme catalyses Hydrolysis of Ala-|-Gly bond in repressor LexA.. Functionally, represses a number of genes involved in the response to DNA damage (SOS response), including recA and lexA. In the presence of single-stranded DNA, RecA interacts with LexA causing an autocatalytic cleavage which disrupts the DNA-binding part of LexA, leading to derepression of the SOS regulon and eventually DNA repair. The sequence is that of LexA repressor from Stenotrophomonas maltophilia (strain R551-3).